A 131-amino-acid chain; its full sequence is Leptin receptor overlapping transcript-like 1 (131 aa).

4 helical membrane passes run 7–27 (LISL…GCAL), 32–52 (KYWP…YCIA), 69–89 (LAIF…IVFA), and 100–120 (ALVL…FLVF).

This sequence belongs to the OB-RGRP/VPS55 family. Interacts with RAB13. Widely expressed, with highest expression in heart, testis, adrenal gland, thymus, and spleen, and lowest expression in lung and skeletal muscle.

It is found in the membrane. In terms of biological role, negatively regulates growth hormone (GH) receptor cell surface expression in liver. May play a role in liver resistance to GH during periods of reduced nutrient availability. This chain is Leptin receptor overlapping transcript-like 1 (LEPROTL1), found in Homo sapiens (Human).